The following is a 223-amino-acid chain: Neurotrophic factor BDNF precursor form (223 aa).

Positions 1–5 are cleaved as a signal peptide; that stretch reads SCMKA. The propeptide occupies 6-114; that stretch reads APMKEVSIRG…AANMSMRVRR (109 aa). An N-linked (GlcNAc...) asparagine glycan is attached at N107. 2 disulfide bridges follow: C127–C194 and C172–C223.

This sequence belongs to the NGF-beta family.

The protein resides in the secreted. Its function is as follows. Promotes the survival of neuronal populations that are all located either in the central nervous system or directly connected to it. This chain is Neurotrophic factor BDNF precursor form (BDNF), found in Exiliboa placata (Oaxacan dwarf boa).